A 201-amino-acid chain; its full sequence is Large ribosomal subunit protein uL4 (201 aa).

The segment at 43-73 (TRAQKTRSEVSGGGAKPWRQKGTGRARAGTT) is disordered.

The protein belongs to the universal ribosomal protein uL4 family. Part of the 50S ribosomal subunit.

One of the primary rRNA binding proteins, this protein initially binds near the 5'-end of the 23S rRNA. It is important during the early stages of 50S assembly. It makes multiple contacts with different domains of the 23S rRNA in the assembled 50S subunit and ribosome. Functionally, forms part of the polypeptide exit tunnel. The protein is Large ribosomal subunit protein uL4 of Colwellia psychrerythraea (strain 34H / ATCC BAA-681) (Vibrio psychroerythus).